The sequence spans 418 residues: Actin-related protein 3 (418 aa).

At Ala2 the chain carries N-acetylalanine. An N6-acetyllysine mark is found at Lys240, Lys244, Lys251, and Lys254.

It belongs to the actin family. ARP3 subfamily. In terms of assembly, component of the Arp2/3 complex composed of ACTR2/ARP2, ACTR3/ARP3, ARPC1B/p41-ARC, ARPC2/p34-ARC, ARPC3/p21-ARC, ARPC4/p20-ARC and ARPC5/p16-ARC. Interacts with WHDC1. Interacts weakly with MEFV. Interacts with AVIL.

It is found in the cytoplasm. The protein resides in the cytoskeleton. The protein localises to the cell projection. It localises to the nucleus. In terms of biological role, ATP-binding component of the Arp2/3 complex, a multiprotein complex that mediates actin polymerization upon stimulation by nucleation-promoting factor (NPF). The Arp2/3 complex mediates the formation of branched actin networks in the cytoplasm, providing the force for cell motility. Seems to contact the pointed end of the daughter actin filament. In podocytes, required for the formation of lamellipodia downstream of AVIL and PLCE1 regulation. In addition to its role in the cytoplasmic cytoskeleton, the Arp2/3 complex also promotes actin polymerization in the nucleus, thereby regulating gene transcription and repair of damaged DNA. The Arp2/3 complex promotes homologous recombination (HR) repair in response to DNA damage by promoting nuclear actin polymerization, leading to drive motility of double-strand breaks (DSBs). Plays a role in ciliogenesis. This chain is Actin-related protein 3 (ACTR3), found in Bos taurus (Bovine).